The chain runs to 251 residues: Small ribosomal subunit protein uS3 (251 aa).

Residues 39–109 (IRNYVLARLK…EVKIDVVEVI (71 aa)) enclose the KH type-2 domain. Residues 221–239 (EMKRMKDRRADSKSRPRDP) are compositionally biased toward basic and acidic residues. The disordered stretch occupies residues 221-251 (EMKRMKDRRADSKSRPRDPRSKRRRSRTKRA). Residues 240 to 251 (RSKRRRSRTKRA) are compositionally biased toward basic residues.

The protein belongs to the universal ribosomal protein uS3 family. As to quaternary structure, part of the 30S ribosomal subunit. Forms a tight complex with proteins S10 and S14.

In terms of biological role, binds the lower part of the 30S subunit head. Binds mRNA in the 70S ribosome, positioning it for translation. The protein is Small ribosomal subunit protein uS3 of Chlorobium limicola (strain DSM 245 / NBRC 103803 / 6330).